We begin with the raw amino-acid sequence, 256 residues long: Glutamate racemase (256 aa).

Substrate is bound by residues 11–12 and 43–44; these read DS and YG. Catalysis depends on Cys-74, which acts as the Proton donor/acceptor. 75-76 is a substrate binding site; that stretch reads NT. Cys-182 serves as the catalytic Proton donor/acceptor. 183 to 184 lines the substrate pocket; that stretch reads TH.

This sequence belongs to the aspartate/glutamate racemases family.

The enzyme catalyses L-glutamate = D-glutamate. It participates in cell wall biogenesis; peptidoglycan biosynthesis. In terms of biological role, provides the (R)-glutamate required for cell wall biosynthesis. The sequence is that of Glutamate racemase from Leptospira interrogans serogroup Icterohaemorrhagiae serovar Lai (strain 56601).